The sequence spans 96 residues: Large ribosomal subunit protein bL27 (96 aa).

Positions 1 to 9 (MLRLDLQFF) are excised as a propeptide. The segment at 1–36 (MLRLDLQFFSTKKGQGSSKNGRDSESKRLGSKRADG) is disordered. Over residues 8-19 (FFSTKKGQGSSK) the composition is skewed to polar residues. Residues 20–35 (NGRDSESKRLGSKRAD) are compositionally biased toward basic and acidic residues.

This sequence belongs to the bacterial ribosomal protein bL27 family. Post-translationally, the N-terminus is cleaved by ribosomal processing cysteine protease Prp.

The chain is Large ribosomal subunit protein bL27 from Oceanobacillus iheyensis (strain DSM 14371 / CIP 107618 / JCM 11309 / KCTC 3954 / HTE831).